Consider the following 144-residue polypeptide: Tryparedoxin (144 aa).

Residues 2–144 (SGLAKYLPGA…PDGANFPWPN (143 aa)) form the Thioredoxin domain. Cys40 and Cys43 are oxidised to a cystine.

It belongs to the thioredoxin family.

Its function is as follows. Acts as a thiol-disulfide oxidoreductase. It is spontaneously reduced by trypanothione. This chain is Tryparedoxin, found in Trypanosoma brucei brucei.